The sequence spans 753 residues: Neuroendocrine convertase 1 (753 aa).

The N-terminal stretch at 1-27 (MEQRGWTLQCTAFAFFCVWCALSSVKA) is a signal peptide. A propeptide spanning residues 28–110 (KRQFVNEWAA…QQYEKERSKR (83 aa)) is cleaved from the precursor. The 322-residue stretch at 129–450 (QWYLQDTRMT…FGLLNAKALV (322 aa)) folds into the Peptidase S8 domain. Residues aspartate 167 and histidine 208 each act as charge relay system in the active site. Cystine bridges form between cysteine 225–cysteine 374 and cysteine 317–cysteine 347. Serine 382 acts as the Charge relay system in catalysis. N-linked (GlcNAc...) asparagine glycosylation is present at asparagine 401. Positions 460 to 597 (NVPEKKECVV…KLILHGTSSQ (138 aa)) constitute a P/Homo B domain. A disulfide bridge links cysteine 467 with cysteine 494. Positions 633–651 (QKSLNGNLLVPKNSSSSNV) are enriched in polar residues. The segment at 633 to 663 (QKSLNGNLLVPKNSSSSNVEGRRDEQVQGTP) is disordered. Asparagine 645 carries an N-linked (GlcNAc...) asparagine glycan.

It belongs to the peptidase S8 family. Furin subfamily. The cofactor is Ca(2+).

The protein resides in the cytoplasmic vesicle. It localises to the secretory vesicle. It carries out the reaction Release of protein hormones, neuropeptides and renin from their precursors, generally by hydrolysis of -Lys-Arg-|- bonds.. In terms of biological role, involved in the processing of hormone and other protein precursors at sites comprised of pairs of basic amino acid residues. Substrates include POMC, renin, enkephalin, dynorphin, somatostatin, insulin and AGRP. The polypeptide is Neuroendocrine convertase 1 (Pcsk1) (Mus cookii (Cook's mouse)).